Consider the following 455-residue polypeptide: Adenylyltransferase and sulfurtransferase MOCS3 (455 aa).

ATP contacts are provided by residues Gly-90, Asp-111, 118–122 (SNLAR), Lys-135, and 179–180 (DN). The interval 156–236 (AQALTPATAL…QPPPAETVTN (81 aa)) is interaction with NFS1. 2 residues coordinate Zn(2+): Cys-220 and Cys-223. The active-site Glycyl thioester intermediate; for adenylyltransferase activity is Cys-237. Cys-295 and Cys-298 together coordinate Zn(2+). Cysteines 314 and 322 form a disulfide. The 109-residue stretch at 345–453 (SGSPHLLLDV…WAAKVDGTFP (109 aa)) folds into the Rhodanese domain. Residue Cys-410 is the Cysteine persulfide intermediate; for sulfurtransferase activity of the active site. Cys-410 carries the cysteine persulfide modification.

It in the N-terminal section; belongs to the HesA/MoeB/ThiF family. UBA4 subfamily. In terms of assembly, interacts with NFS1. Requires Zn(2+) as cofactor.

It localises to the cytoplasm. The protein resides in the cytosol. The catalysed reaction is [molybdopterin-synthase sulfur-carrier protein]-C-terminal Gly-Gly + ATP + H(+) = [molybdopterin-synthase sulfur-carrier protein]-C-terminal Gly-Gly-AMP + diphosphate. The enzyme catalyses [molybdopterin-synthase sulfur-carrier protein]-C-terminal Gly-Gly-AMP + S-sulfanyl-L-cysteinyl-[cysteine desulfurase] + AH2 = [molybdopterin-synthase sulfur-carrier protein]-C-terminal-Gly-aminoethanethioate + L-cysteinyl-[cysteine desulfurase] + A + AMP + 2 H(+). It functions in the pathway tRNA modification; 5-methoxycarbonylmethyl-2-thiouridine-tRNA biosynthesis. The protein operates within cofactor biosynthesis; molybdopterin biosynthesis. Functionally, plays a central role in 2-thiolation of mcm(5)S(2)U at tRNA wobble positions of cytosolic tRNA(Lys), tRNA(Glu) and tRNA(Gln). Also essential during biosynthesis of the molybdenum cofactor. Acts by mediating the C-terminal thiocarboxylation of sulfur carriers URM1 and MOCS2A. Its N-terminus first activates URM1 and MOCS2A as acyl-adenylates (-COAMP), then the persulfide sulfur on the catalytic cysteine is transferred to URM1 and MOCS2A to form thiocarboxylation (-COSH) of their C-terminus. The reaction probably involves hydrogen sulfide that is generated from the persulfide intermediate and that acts as a nucleophile towards URM1 and MOCS2A. Subsequently, a transient disulfide bond is formed. Does not use thiosulfate as sulfur donor; NFS1 acting as a sulfur donor for thiocarboxylation reactions. The protein is Adenylyltransferase and sulfurtransferase MOCS3 of Sus scrofa (Pig).